A 283-amino-acid polypeptide reads, in one-letter code: Thymidylate synthase (283 aa).

R22 contacts dUMP. The active-site Nucleophile is C160. Residues 180 to 183, N191, and 221 to 223 each bind dUMP; these read RSCD and HIY. Residue D183 participates in (6R)-5,10-methylene-5,6,7,8-tetrahydrofolate binding. S282 is a binding site for (6R)-5,10-methylene-5,6,7,8-tetrahydrofolate.

It belongs to the thymidylate synthase family. Bacterial-type ThyA subfamily. Homodimer.

The protein resides in the cytoplasm. It carries out the reaction dUMP + (6R)-5,10-methylene-5,6,7,8-tetrahydrofolate = 7,8-dihydrofolate + dTMP. The protein operates within pyrimidine metabolism; dTTP biosynthesis. Catalyzes the reductive methylation of 2'-deoxyuridine-5'-monophosphate (dUMP) to 2'-deoxythymidine-5'-monophosphate (dTMP) while utilizing 5,10-methylenetetrahydrofolate (mTHF) as the methyl donor and reductant in the reaction, yielding dihydrofolate (DHF) as a by-product. This enzymatic reaction provides an intracellular de novo source of dTMP, an essential precursor for DNA biosynthesis. This is Thymidylate synthase from Shewanella halifaxensis (strain HAW-EB4).